The chain runs to 146 residues: VPIRKVQDDTKTLIKTIVTRINDISHTQSVSSKQRVTGLDFIPGLHPLLSLSKMDQTLAIYQQILASLPSRNVIQISNDLENLRDLLHLLAASKSCPLPQVRALESLESLGVVLEASLYSTEVVALSRLQGSLQDMLRQLDLSPGC.

An intrachain disulfide couples Cys-96 to Cys-146.

It belongs to the leptin family.

The protein resides in the secreted. In terms of biological role, key player in the regulation of energy balance and body weight control. Once released into the circulation, has central and peripheral effects by binding LEPR, found in many tissues, which results in the activation of several major signaling pathways. In the hypothalamus, acts as an appetite-regulating factor that induces a decrease in food intake and an increase in energy consumption by inducing anorexinogenic factors and suppressing orexigenic neuropeptides, also regulates bone mass and secretion of hypothalamo-pituitary-adrenal hormones. In the periphery, increases basal metabolism, influences reproductive function, regulates pancreatic beta-cell function and insulin secretion, is pro-angiogenic for endothelial cell and affects innate and adaptive immunity. In the arcuate nucleus of the hypothalamus, activates by depolarization POMC neurons inducing FOS and SOCS3 expression to release anorexigenic peptides and inhibits by hyperpolarization NPY neurons inducing SOCS3 with a consequent reduction on release of orexigenic peptides. In addition to its known satiety inducing effect, has a modulatory role in nutrient absorption. In the intestine, reduces glucose absorption by enterocytes by activating PKC and leading to a sequential activation of p38, PI3K and ERK signaling pathways which exerts an inhibitory effect on glucose absorption. Acts as a growth factor on certain tissues, through the activation of different signaling pathways increases expression of genes involved in cell cycle regulation such as CCND1, via JAK2-STAT3 pathway, or VEGFA, via MAPK1/3 and PI3K-AKT1 pathways. May also play an apoptotic role via JAK2-STAT3 pathway and up-regulation of BIRC5 expression. Pro-angiogenic, has mitogenic activity on vascular endothelial cells and plays a role in matrix remodeling by regulating the expression of matrix metalloproteinases (MMPs) and tissue inhibitors of metalloproteinases (TIMPs). In innate immunity, modulates the activity and function of neutrophils by increasing chemotaxis and the secretion of oxygen radicals. Increases phagocytosis by macrophages and enhances secretion of pro-inflammatory mediators. Increases cytotoxic ability of NK cells. Plays a pro-inflammatory role, in synergy with IL1B, by inducing NOS2 which promotes the production of IL6, IL8 and Prostaglandin E2, through a signaling pathway that involves JAK2, PI3K, MAP2K1/MEK1 and MAPK14/p38. In adaptive immunity, promotes the switch of memory T-cells towards T helper-1 cell immune responses. Increases CD4(+)CD25(-) T-cell proliferation and reduces autophagy during TCR (T-cell receptor) stimulation, through MTOR signaling pathway activation and BCL2 up-regulation. This chain is Leptin (LEP), found in Ovis aries (Sheep).